A 228-amino-acid chain; its full sequence is Heptaprenylglyceryl phosphate synthase (228 aa).

Residue Lys-12 coordinates sn-glycerol 1-phosphate. Mg(2+) is bound by residues Asp-14 and Thr-40. Sn-glycerol 1-phosphate is bound by residues 159 to 164 (YLEYSG), Gly-189, and 209 to 210 (GN).

Belongs to the GGGP/HepGP synthase family. Group I subfamily. In terms of assembly, homodimer. Requires Mg(2+) as cofactor.

The catalysed reaction is sn-glycerol 1-phosphate + all-trans-heptaprenyl diphosphate = 3-heptaprenyl-sn-glycero-1-phosphate + diphosphate. It functions in the pathway membrane lipid metabolism; glycerophospholipid metabolism. Functionally, prenyltransferase that catalyzes in vivo the transfer of the heptaprenyl moiety of heptaprenyl pyrophosphate (HepPP; 35 carbon atoms) to the C3 hydroxyl of sn-glycerol-1-phosphate (G1P), producing heptaprenylglyceryl phosphate (HepGP). This reaction is an ether-bond-formation step in the biosynthesis of archaea-type G1P-based membrane lipids found in Bacillales. This is Heptaprenylglyceryl phosphate synthase from Geobacillus sp. (strain WCH70).